The chain runs to 1508 residues: ABC-type transporter oblD (1508 aa).

Disordered regions lie at residues Met-1–Asn-35 and Lys-54–Gly-82. Residues Thr-11 to Asn-24 show a composition bias toward polar residues. 2 N-linked (GlcNAc...) asparagine glycosylation sites follow: Asn-24 and Asn-35. The span at Tyr-55 to Pro-68 shows a compositional bias: polar residues. 3 N-linked (GlcNAc...) asparagine glycosylation sites follow: Asn-83, Asn-231, and Asn-314. Residues Leu-136–Asp-390 enclose the ABC transporter 1 domain. 5 helical membrane-spanning segments follow: residues Ile-501–Phe-521, Leu-536–Tyr-556, Gly-610–Phe-630, Ala-643–Pro-663, and Gly-752–Ile-772. In terms of domain architecture, ABC transporter 2 spans Phe-828–Gly-1070. Position 864-871 (Gly-864–Thr-871) interacts with ATP. 4 helical membrane passes run Tyr-1172–Tyr-1192, Phe-1206–Phe-1226, Leu-1296–Leu-1316, and Ala-1322–Thr-1342. The N-linked (GlcNAc...) asparagine glycan is linked to Asn-1390. A helical membrane pass occupies residues Phe-1443 to Trp-1463.

It belongs to the ABC transporter superfamily. ABCG family. PDR (TC 3.A.1.205) subfamily.

The protein localises to the cell membrane. In terms of biological role, ABC-type transporter; part of the gene cluster that mediates the biosynthesis of the sesterterpenes ophiobolins, fungal phytotoxins with potential anti-cancer activities. Acts as a specific transporter involved in ophiobolins secretion. The chain is ABC-type transporter oblD from Cochliobolus heterostrophus (strain C5 / ATCC 48332 / race O) (Southern corn leaf blight fungus).